The following is a 245-amino-acid chain: UDP-N-acetyl-D-mannosaminuronic acid transferase (245 aa).

Belongs to the glycosyltransferase 26 family.

The enzyme catalyses UDP-N-acetyl-alpha-D-mannosaminouronate + N-acetyl-alpha-D-glucosaminyl-di-trans,octa-cis-undecaprenyl diphosphate = beta-D-ManNAcA-(1-&gt;4)-alpha-D-GlcNAc-di-trans,octa-cis-undecaprenyl diphosphate + UDP + H(+). It functions in the pathway bacterial outer membrane biogenesis; enterobacterial common antigen biosynthesis. In terms of biological role, catalyzes the synthesis of Und-PP-GlcNAc-ManNAcA (Lipid II), the second lipid-linked intermediate involved in enterobacterial common antigen (ECA) synthesis. This is UDP-N-acetyl-D-mannosaminuronic acid transferase from Proteus mirabilis (strain HI4320).